Consider the following 132-residue polypeptide: Small ribosomal subunit protein uS8 (132 aa).

It belongs to the universal ribosomal protein uS8 family. As to quaternary structure, part of the 30S ribosomal subunit. Contacts proteins S5 and S12.

Functionally, one of the primary rRNA binding proteins, it binds directly to 16S rRNA central domain where it helps coordinate assembly of the platform of the 30S subunit. In Clostridium botulinum (strain 657 / Type Ba4), this protein is Small ribosomal subunit protein uS8.